The chain runs to 299 residues: DNA-binding transcriptional activator HetR (299 aa).

Residues 1–98 are DNA-binding domain; the sequence is MSNDIDLIKR…GKLLKTLGSQ (98 aa). DNA is bound by residues 34–40 and 60–76; these read RHGAFLD and NLRM…KRVK. The segment at 99–216 is flap domain; sequence EPRYLIQFPY…FYALTRPFYA (118 aa). Ser-152 is a catalytic residue. Position 179–181 (179–181) interacts with DNA; the sequence is SEA. The segment at 217-299 is hood domain; it reads PADDQERTYI…LQMVFGRKED (83 aa).

Belongs to the peptidase S48 family. In terms of assembly, upon expression in E.coli most protein is monomeric, although varying amounts of homodimer can be seen. Homodimer; disulfide-linked. Homodimer. Binds the 6 residue C-terminal peptide of PatS; one peptide binds to each subunit. In bacterial two-hybrid assays interacts robustly with itself, Alr2902 and Alr3234 and more weakly with Als1930. Probably autodegrades.

With respect to regulation, protease activity is inhibited by PMSF, suggesting this is a serine protease. In terms of biological role, controls heterocyst differentiation. Dimerization is required for DNA-binding. Has both a protease and a DNA-binding activity. Functionally, controls heterocyst differentiation; increased expression leads to more heterocysts than usual. Has protease activity. Binds the promoter regions of hetR, hepA and patS and is required for their expression. Dimerization is required for DNA-binding, DNA-binding is inhibited by the PatS6 peptide. Binds the inverted repeat 5'-GTAGGCGAGGGGTCTAACCCCTCATTACC-3' found in the hetP promoter, required for expression of hetP. The sequence is that of DNA-binding transcriptional activator HetR from Nostoc sp. (strain PCC 7120 / SAG 25.82 / UTEX 2576).